A 195-amino-acid chain; its full sequence is Pyruvoyl-dependent arginine decarboxylase AaxB (195 aa).

The residue at position 53 (Ser53) is a Pyruvic acid (Ser).

This sequence belongs to the pyruvoyl-dependent arginine decarboxylase family. Trimer of an alpha-beta dimer. Pyruvate serves as cofactor.

It is found in the cytoplasm. It carries out the reaction L-arginine + H(+) = agmatine + CO2. Functionally, part of the AaxABC system, catalyzes the decarboxylation of L-arginine. The arginine uptake by the bacterium in the macrophage may be a virulence factor against the host innate immune response. This chain is Pyruvoyl-dependent arginine decarboxylase AaxB (aaxB), found in Chlamydia trachomatis serovar D (strain ATCC VR-885 / DSM 19411 / UW-3/Cx).